A 307-amino-acid chain; its full sequence is Coproporphyrin III ferrochelatase (307 aa).

Residues Tyr-12, Arg-29, 45-46, Ser-53, and Tyr-124 contribute to the Fe-coproporphyrin III site; that span reads RY. The Fe(2+) site is built by His-181 and Glu-263.

This sequence belongs to the ferrochelatase family.

It localises to the cytoplasm. It catalyses the reaction Fe-coproporphyrin III + 2 H(+) = coproporphyrin III + Fe(2+). It functions in the pathway porphyrin-containing compound metabolism; protoheme biosynthesis. Its function is as follows. Involved in coproporphyrin-dependent heme b biosynthesis. Catalyzes the insertion of ferrous iron into coproporphyrin III to form Fe-coproporphyrin III. It can also insert iron into protoporphyrin IX, but it has a much stronger preference for coproprophyrin III as the substrate. The sequence is that of Coproporphyrin III ferrochelatase from Staphylococcus aureus (strain NCTC 8325 / PS 47).